Consider the following 70-residue polypeptide: Cytoinsectotoxin-2c (70 aa).

The protein belongs to the cationic peptide 06 (cytoinsectotoxin) family. Expressed by the venom gland.

Its subcellular location is the secreted. Its function is as follows. Insecticidal and antimicrobial peptide. Has insecticidal activity against larvae of flesh fly S.carnaria. Has antibacterial activity against Gram-positive bacterium B.subtilis B-501 (MIC=1.25 uM) and Gram-negative bacterium E.coli DH5alpha (MIC=2.5 uM). The protein is Cytoinsectotoxin-2c of Lachesana tarabaevi (Spider).